Consider the following 335-residue polypeptide: N-acetyl-gamma-glutamyl-phosphate reductase (335 aa).

Cys-156 is a catalytic residue.

This sequence belongs to the NAGSA dehydrogenase family. Type 1 subfamily.

It localises to the cytoplasm. The enzyme catalyses N-acetyl-L-glutamate 5-semialdehyde + phosphate + NADP(+) = N-acetyl-L-glutamyl 5-phosphate + NADPH + H(+). Its pathway is amino-acid biosynthesis; L-arginine biosynthesis; N(2)-acetyl-L-ornithine from L-glutamate: step 3/4. In terms of biological role, catalyzes the NADPH-dependent reduction of N-acetyl-5-glutamyl phosphate to yield N-acetyl-L-glutamate 5-semialdehyde. This is N-acetyl-gamma-glutamyl-phosphate reductase from Aeromonas salmonicida (strain A449).